Reading from the N-terminus, the 724-residue chain is Disks large homolog 4 (724 aa).

2 S-palmitoyl cysteine lipidation sites follow: Cys3 and Cys5. The segment at 15-35 (QDEDTPPLEHSPAHLPNQANS) is disordered. PDZ domains lie at 65 to 151 (EITL…VMRR) and 160 to 246 (EIKL…VAKP). A phosphoserine mark is found at Ser73 and Ser142. Tyr240 carries the phosphotyrosine modification. Ser295 carries the post-translational modification Phosphoserine. One can recognise a PDZ 3 domain in the interval 313-393 (RIVIHRGSTG…QTVTIIAQYK (81 aa)). Phosphoserine occurs at positions 415 and 418. Thr420 carries the post-translational modification Phosphothreonine. Ser422, Ser425, Ser449, and Ser480 each carry phosphoserine. An SH3 domain is found at 428-498 (KRGFYIRALF…PSKRRVERRE (71 aa)). The Guanylate kinase-like domain maps to 534–709 (ARPIIILGPT…IYHKVKRVIE (176 aa)). Tyr580 bears the Phosphotyrosine mark. Phosphoserine occurs at positions 606 and 654. Residue Tyr715 is modified to Phosphotyrosine.

The protein belongs to the MAGUK family. As to quaternary structure, interacts through its PDZ domains with ANO2 and NETO1. Interacts with KCNJ4. Interacts through its first two PDZ domains with GRIN2A, GRIN2B, GRIN2C and GRIN2D. Interacts with ERBB4. Interacts with KCNA1, KCNA2, KCNA3 and KCNA4. Interacts with LRRC4 and LRRC4B. Interacts with SYNGAP1. Interacts with ASIC3. Interacts with SEMA4C. Interacts with CXADR. Interacts with KCND2. Interacts (via first PDZ domain) with CRIPT. Interacts through its first PDZ domain with GRIK2 and KCNA4. Interacts through its second PDZ domain with the PDZ domain of NOS1 or the C-terminus of CAPON. Interacts through its third PDZ domain with NLGN1 and CRIPT, and probably with NLGN2 and NLGN3. Interacts through its guanylate kinase-like domain with DLGAP1/GKAP, DLGAP2, DLGAP3, DLGAP4, MAP1A, BEGAIN and SIPA1L1. Interacts through its guanylate kinase-like domain with KIF13B. Isoform 2 interacts through an L27 domain with HGS/HRS and the first L27 domain of CASK. Interacts with ANKS1B. Interacts with ADR1B. May interact with HTR2A. Interacts with ADAM22, KLHL17 and LGI1. Interacts with FRMPD4 (via C-terminus). Interacts with LRFN1 and LRFN2. Interacts with LRFN4. Interacts (via N-terminal tandem pair of PDZ domains) with GPER1 (via C-terminus tail motif); the interaction is direct and induces the increase of GPER1 protein levels residing at the plasma membrane surface in a estradiol-independent manner. Interacts (via N-terminus tandem pair of PDZ domains) with NOS1 (via N-terminal domain). Interacts with SHANK3. Interacts with GPR85. Interacts with CACNG2 and MPP2 (via the SH3-Guanylate kinase-like sub-module). Interacts with ADGRB1. Found in a complex with PRR7 and GRIN1. Interacts (via PDZ3 domain and to lesser degree via PDZ2 domain) with PRR7. Component of the postsynaptic hippocampal AMPA-type glutamate receptor (AMPAR) complex, at least composed of pore forming AMPAR subunits GRIA1, GRIA2 and GRIA3 and AMPAR auxiliary proteins SHISA6 and SHISA7. Interacts (via its first two PDZ domains) with SHISA6 and SHISA7 (via PDZ-binding motif); the interaction is direct. Interacts (via PDZ domain 2) with SEMA4F (via PDZ-binding motif); this interaction may promote translocation of DLG4/SAP90 to the membrane. Interacts with RPH3A and GRIN2A; this ternary complex regulates NMDA receptor composition at postsynaptic membranes. Interacts with ABR and BCR. Interacts with DGKI (via PDZ-binding motif); controls the localization of DGKI to the synapse. Interacts with C9orf72, SMCR8 and RAB39B. Interacts with ZDHHC5. Interacts with PTEN (via PDZ domain-binding motif); the interaction is induced by NMDA and is required for PTEN location at postsynaptic density. Found in a complex with GRIA1, GRIA2, GRIA3, GRIA4, CACNG8 and CNIH2. Interacts with FAM81A; the interaction facilitates condensate formation via liquid-liquid phase separation. Interacts with ADGRL3. Interacts with SORCS3. Post-translationally, palmitoylated. Palmitoylation is required for targeting to postsynaptic density, plasma membrane and synapses. Palmitoylation by ZDHHC2 occurs when the synaptic activity decreases and induces DLG4 synaptic clustering. Palmitoylation by ZDHHC15 regulates trafficking to the postsynaptic density and function in synaptogenesis. Palmitoylation may play a role in glutamate receptor GRIA1 synapse clustering. Depalmitoylated by ABHD17A and ABHD17B and to a lesser extent by ABHD17C, ABHD12, ABHD13, LYPLA1 and LYPLA2. Undergoes rapid synaptic palmitoylation/depalmitoylation cycle during neuronal development which slows down in mature neurons. Ubiquitinated by MDM2 in response to NMDA receptor activation, leading to proteasome-mediated degradation of DLG4 which is required for AMPA receptor endocytosis. Expressed in brain (at protein level). Detected in juxtaparanodal zones in the central nervous system and at nerve terminal plexuses of basket cells in the cerebellum. Expressed in cerebrum. Expressed in hippocampal neurons (at protein level). Isoform 1 and isoform 2: highly expressed in cerebellum, cortex, hippocampus, and corpus striatum.

It localises to the cell membrane. Its subcellular location is the postsynaptic density. The protein localises to the synapse. It is found in the cytoplasm. The protein resides in the cell projection. It localises to the axon. Its subcellular location is the dendritic spine. The protein localises to the dendrite. It is found in the presynapse. Its function is as follows. Postsynaptic scaffolding protein that plays a critical role in synaptogenesis and synaptic plasticity by providing a platform for the postsynaptic clustering of crucial synaptic proteins. Interacts with the cytoplasmic tail of NMDA receptor subunits and shaker-type potassium channels. Required for synaptic plasticity associated with NMDA receptor signaling. Overexpression or depletion of DLG4 changes the ratio of excitatory to inhibitory synapses in hippocampal neurons. May reduce the amplitude of ASIC3 acid-evoked currents by retaining the channel intracellularly. May regulate the intracellular trafficking of ADR1B. Also regulates AMPA-type glutamate receptor (AMPAR) immobilization at postsynaptic density keeping the channels in an activated state in the presence of glutamate and preventing synaptic depression. Under basal conditions, cooperates with FYN to stabilize palmitoyltransferase ZDHHC5 at the synaptic membrane through FYN-mediated phosphorylation of ZDHHC5 and its subsequent inhibition of association with endocytic proteins. This Rattus norvegicus (Rat) protein is Disks large homolog 4.